A 59-amino-acid chain; its full sequence is UPF0434 protein Rsph17025_2896 (59 aa).

It belongs to the UPF0434 family.

This is UPF0434 protein Rsph17025_2896 from Cereibacter sphaeroides (strain ATCC 17025 / ATH 2.4.3) (Rhodobacter sphaeroides).